The sequence spans 151 residues: Meiotically up-regulated gene 114 protein (151 aa).

The protein localises to the cytoplasm. Functionally, has a role in meiosis. The sequence is that of Meiotically up-regulated gene 114 protein (mug114) from Schizosaccharomyces pombe (strain 972 / ATCC 24843) (Fission yeast).